Here is a 117-residue protein sequence, read N- to C-terminus: Large ribosomal subunit protein bL19 (117 aa).

The protein belongs to the bacterial ribosomal protein bL19 family.

This protein is located at the 30S-50S ribosomal subunit interface and may play a role in the structure and function of the aminoacyl-tRNA binding site. This chain is Large ribosomal subunit protein bL19, found in Vibrio parahaemolyticus serotype O3:K6 (strain RIMD 2210633).